The primary structure comprises 197 residues: Orotate phosphoribosyltransferase (197 aa).

5-phospho-alpha-D-ribose 1-diphosphate-binding positions include Arg87, Lys91, His93, and 112 to 120; that span reads DDVATTGGS. Thr116 and Arg144 together coordinate orotate.

The protein belongs to the purine/pyrimidine phosphoribosyltransferase family. PyrE subfamily. Homodimer. Mg(2+) serves as cofactor.

The catalysed reaction is orotidine 5'-phosphate + diphosphate = orotate + 5-phospho-alpha-D-ribose 1-diphosphate. Its pathway is pyrimidine metabolism; UMP biosynthesis via de novo pathway; UMP from orotate: step 1/2. Its function is as follows. Catalyzes the transfer of a ribosyl phosphate group from 5-phosphoribose 1-diphosphate to orotate, leading to the formation of orotidine monophosphate (OMP). The sequence is that of Orotate phosphoribosyltransferase from Sulfolobus acidocaldarius (strain ATCC 33909 / DSM 639 / JCM 8929 / NBRC 15157 / NCIMB 11770).